Reading from the N-terminus, the 187-residue chain is UPF0301 protein VV2869 (187 aa).

This sequence belongs to the UPF0301 (AlgH) family.

This chain is UPF0301 protein VV2869, found in Vibrio vulnificus (strain YJ016).